Reading from the N-terminus, the 374-residue chain is Pectate lyase 1 (374 aa).

Positions 1–22 (MKYLLPSAAAGLLLLAAQPTMA) are cleaved as a signal peptide. Cys-93 and Cys-176 form a disulfide bridge. Ca(2+)-binding residues include Asp-150, Asp-152, Glu-187, and Asp-191. Arg-239 is an active-site residue. A disulfide bridge connects residues Cys-350 and Cys-373.

Belongs to the polysaccharide lyase 1 family. PLADES subfamily. Requires Ca(2+) as cofactor.

It localises to the secreted. The enzyme catalyses Eliminative cleavage of (1-&gt;4)-alpha-D-galacturonan to give oligosaccharides with 4-deoxy-alpha-D-galact-4-enuronosyl groups at their non-reducing ends.. The protein operates within glycan metabolism; pectin degradation; 2-dehydro-3-deoxy-D-gluconate from pectin: step 2/5. Functionally, involved in maceration and soft-rotting of plant tissue. This is Pectate lyase 1 (pel1) from Pectobacterium carotovorum (Erwinia carotovora).